Consider the following 974-residue polypeptide: Phosphoenolpyruvate carboxylase 1 (974 aa).

Active-site residues include His-164 and Lys-604.

The protein belongs to the PEPCase type 1 family. As to quaternary structure, exists as a homotetramer or heterooligomer. Requires Mg(2+) as cofactor.

Its subcellular location is the cytoplasm. It carries out the reaction oxaloacetate + phosphate = phosphoenolpyruvate + hydrogencarbonate. With respect to regulation, activated by glutamine and dihydroxyacetone phosphate. Inhibited by glutamate, aspartate, 2-oxoglutarate and malate. Functionally, through the carboxylation of phosphoenolpyruvate (PEP) it forms oxaloacetate, a four-carbon dicarboxylic acid source for the tricarboxylic acid cycle. This is Phosphoenolpyruvate carboxylase 1 from Chlamydomonas reinhardtii (Chlamydomonas smithii).